The following is a 318-amino-acid chain: Solute carrier family 25 member 34 (318 aa).

Solcar repeat units lie at residues 18–111 (VSPA…ACQA), 115–208 (QQPG…AKAW), and 218–309 (DSWL…LRKL). Transmembrane regions (helical) follow at residues 21 to 41 (AVDL…TNPL), 59 to 79 (TYPR…RADG), 112 to 134 (GLTQ…GAFV), 184 to 205 (VGAA…FTSA), 220 to 240 (WLAT…VMAP), and 292 to 315 (LGPH…RAQH).

Belongs to the mitochondrial carrier (TC 2.A.29) family.

It localises to the mitochondrion inner membrane. The enzyme catalyses a dicarboxylate(in) + sulfate(out) = a dicarboxylate(out) + sulfate(in). Functionally, putative antiporter that exchanges dicarboxylates and sulfur oxoanions across the inner membrane of mitochondria. The sequence is that of Solute carrier family 25 member 34 (Slc25a34) from Rattus norvegicus (Rat).